The sequence spans 228 residues: Leucokinins (228 aa).

Positions 1–18 are cleaved as a signal peptide; it reads MAMLLQVALPLLAAVSWG. The propeptide occupies 19–164; the sequence is WELNENDDSL…PRFSPVSAIQ (146 aa). A disordered region spans residues 80–118; the sequence is EFSENNEAEDKSPTSAQNTQEHIPGNNFPPPAASNPPVN. Glycine amide occurs at positions 180 and 193. A propeptide spanning residues 197 to 209 is cleaved from the precursor; that stretch reads NTGRVHRQPKVVI. Position 217 is a glycine amide (Gly-217). The propeptide occupies 221–228; that stretch reads NQKDDNVF.

It is found in the secreted. Functionally, stimulates both fluid secretion by the Malpighian tubules and hindgut contractions. Depolarize the transepithelial voltage of the Malpighian tubules in concentrations of less than 10(-9) M and increase the frequency of hindgut contractions at concentrations above 10(-8) M. The protein is Leucokinins of Aedes aegypti (Yellowfever mosquito).